Reading from the N-terminus, the 994-residue chain is Leucine-rich repeat receptor-like kinase protein FLORAL ORGAN NUMBER1 (994 aa).

The first 17 residues, 1–17, serve as a signal peptide directing secretion; it reads MPPTLLLLLLLLPPSLA. LRR repeat units follow at residues 73–93, 94–117, 118–141, 147–171, 172–194, 195–219, 244–268, 269–292, 293–316, 318–340, 341–364, 365–388, 390–412, 413–436, 438–459, 460–483, 484–507, 509–531, 533–555, 556–579, and 581–604; these read AINL…IALL, DSLA…LPTL, PSLR…DSGG, FPSL…SASH, ARLR…SYGD, LAAL…LSRL, LGAL…LGRL, QRLD…LGDL, SSLA…LANL, NLKL…VAGF, AQLE…LGKN, GRLK…LCAG, RLEM…LGDC, KTLT…LFNL, QANM…VIGG, DKIG…IGNL, PALQ…IGNL, NLSR…LIRC, SLAA…ITSL, KILC…MSNM, and SLTT…QFLV. N-linked (GlcNAc...) asparagine glycosylation is found at Asn-75, Asn-98, Asn-124, Asn-129, and Asn-159. N-linked (GlcNAc...) asparagine glycosylation is present at Asn-256. The N-linked (GlcNAc...) asparagine glycan is linked to Asn-315. Asn-352 carries N-linked (GlcNAc...) asparagine glycosylation. Residues Asn-495, Asn-509, and Asn-514 are each glycosylated (N-linked (GlcNAc...) asparagine). 2 N-linked (GlcNAc...) asparagine glycosylation sites follow: Asn-562 and Asn-578. N-linked (GlcNAc...) asparagine glycosylation is present at Asn-606. A helical membrane pass occupies residues 647–667; sequence KKMLVALVAAFAAVAVAFLGA. Residues 704–978 form the Protein kinase domain; that stretch reads VKEDNIIGKG…TMREVVHMLS (275 aa). ATP is bound by residues 710-718 and Lys-731; that span reads IGKGGAGIV. Asp-828 acts as the Proton acceptor in catalysis.

It belongs to the protein kinase superfamily. Ser/Thr protein kinase family. Expressed in shoot apical meristem, and after transition to the reproductive phase, detected in the inflorescence and the floral meristems. Expressed uniformly throughout the meristems. Expressed also in floral organ primordia, such as the palea, lemma, lodicules, stamens, carpels and ovules.

It localises to the membrane. It catalyses the reaction L-seryl-[protein] + ATP = O-phospho-L-seryl-[protein] + ADP + H(+). The catalysed reaction is L-threonyl-[protein] + ATP = O-phospho-L-threonyl-[protein] + ADP + H(+). Functionally, receptor-like kinase protein that regulates the size of the floral meristem. The polypeptide is Leucine-rich repeat receptor-like kinase protein FLORAL ORGAN NUMBER1 (FON1) (Oryza sativa subsp. japonica (Rice)).